The sequence spans 458 residues: ATP synthase subunit beta (458 aa).

An ATP-binding site is contributed by 148–155; that stretch reads GGAGVGKT.

This sequence belongs to the ATPase alpha/beta chains family. As to quaternary structure, F-type ATPases have 2 components, CF(1) - the catalytic core - and CF(0) - the membrane proton channel. CF(1) has five subunits: alpha(3), beta(3), gamma(1), delta(1), epsilon(1). CF(0) has three main subunits: a(1), b(2) and c(9-12). The alpha and beta chains form an alternating ring which encloses part of the gamma chain. CF(1) is attached to CF(0) by a central stalk formed by the gamma and epsilon chains, while a peripheral stalk is formed by the delta and b chains.

It localises to the cell inner membrane. It catalyses the reaction ATP + H2O + 4 H(+)(in) = ADP + phosphate + 5 H(+)(out). In terms of biological role, produces ATP from ADP in the presence of a proton gradient across the membrane. The catalytic sites are hosted primarily by the beta subunits. This Laribacter hongkongensis (strain HLHK9) protein is ATP synthase subunit beta.